The chain runs to 284 residues: 4-diphosphocytidyl-2-C-methyl-D-erythritol kinase (284 aa).

Residue lysine 17 is part of the active site. 100-110 (PMGGGLGGGSS) is an ATP binding site. Residue aspartate 142 is part of the active site.

Belongs to the GHMP kinase family. IspE subfamily.

The catalysed reaction is 4-CDP-2-C-methyl-D-erythritol + ATP = 4-CDP-2-C-methyl-D-erythritol 2-phosphate + ADP + H(+). Its pathway is isoprenoid biosynthesis; isopentenyl diphosphate biosynthesis via DXP pathway; isopentenyl diphosphate from 1-deoxy-D-xylulose 5-phosphate: step 3/6. Catalyzes the phosphorylation of the position 2 hydroxy group of 4-diphosphocytidyl-2C-methyl-D-erythritol. The chain is 4-diphosphocytidyl-2-C-methyl-D-erythritol kinase from Aromatoleum aromaticum (strain DSM 19018 / LMG 30748 / EbN1) (Azoarcus sp. (strain EbN1)).